The primary structure comprises 88 residues: Acylphosphatase (88 aa).

One can recognise an Acylphosphatase-like domain in the interval 3 to 88; sequence AARFVVSGVV…VPPTEDFVTG (86 aa). Catalysis depends on residues Arg18 and Asn36.

Belongs to the acylphosphatase family.

The enzyme catalyses an acyl phosphate + H2O = a carboxylate + phosphate + H(+). The polypeptide is Acylphosphatase (acyP) (Xanthomonas oryzae pv. oryzae (strain MAFF 311018)).